The sequence spans 207 residues: MSKAILLDKKLQQSNELALPERYAQIKEHNLYLYVKSYLSSLRANSASAKKRGEVSGGGKKPWKQKGGGRARAGSITSPVFVGGGVSHGPSNDKNYTLKINKKQKRLALECALFQKAQEGKLFVVDSLAMPSGKTKDAYAMFKALKQRSTLFVAQMSDEPTFLAFRNLQQCYLADANELNAYLVAAFRSVVIEKAVFDEIIAEKKGE.

The interval 49–73 (AKKRGEVSGGGKKPWKQKGGGRARA) is disordered.

It belongs to the universal ribosomal protein uL4 family. As to quaternary structure, part of the 50S ribosomal subunit.

In terms of biological role, one of the primary rRNA binding proteins, this protein initially binds near the 5'-end of the 23S rRNA. It is important during the early stages of 50S assembly. It makes multiple contacts with different domains of the 23S rRNA in the assembled 50S subunit and ribosome. Functionally, forms part of the polypeptide exit tunnel. In Helicobacter hepaticus (strain ATCC 51449 / 3B1), this protein is Large ribosomal subunit protein uL4.